A 350-amino-acid polypeptide reads, in one-letter code: Probable flap endonuclease 1 homolog (350 aa).

The interval 1-95 (MGITKLAHLI…AVLEKRAQST (95 aa)) is N-domain. Mg(2+) is bound at residue Asp34. Arg61 contributes to the DNA binding site. Residues Asp77, Glu130, Glu132, Asp151, and Asp153 each coordinate Mg(2+). Residues 110–223 (NQECLRLLHL…SRALKLIKEH (114 aa)) are I-domain. A DNA-binding site is contributed by Glu130. DNA-binding residues include Gly201 and Asp203. Mg(2+) is bound at residue Asp203. The segment at 317–325 (RQSRLEDFF) is interaction with PCNA.

Belongs to the XPG/RAD2 endonuclease family. FEN1 subfamily. As to quaternary structure, interacts with PCNA. Three molecules of fen1 bind to one PCNA trimer with each molecule binding to one PCNA monomer. PCNA stimulates the nuclease activity without altering cleavage specificity. Mg(2+) serves as cofactor. Post-translationally, phosphorylated. Phosphorylation upon DNA damage induces relocalization to the nuclear plasma.

It localises to the nucleus. Its subcellular location is the nucleolus. The protein resides in the nucleoplasm. It is found in the mitochondrion. Functionally, structure-specific nuclease with 5'-flap endonuclease and 5'-3' exonuclease activities involved in DNA replication and repair. During DNA replication, cleaves the 5'-overhanging flap structure that is generated by displacement synthesis when DNA polymerase encounters the 5'-end of a downstream Okazaki fragment. It enters the flap from the 5'-end and then tracks to cleave the flap base, leaving a nick for ligation. Also involved in the long patch base excision repair (LP-BER) pathway, by cleaving within the apurinic/apyrimidinic (AP) site-terminated flap. Acts as a genome stabilization factor that prevents flaps from equilibrating into structures that lead to duplications and deletions. Also possesses 5'-3' exonuclease activity on nicked or gapped double-stranded DNA, and exhibits RNase H activity. Also involved in replication and repair of rDNA and in repairing mitochondrial DNA. This chain is Probable flap endonuclease 1 homolog, found in Danio rerio (Zebrafish).